A 197-amino-acid chain; its full sequence is HTH-type transcriptional regulator BetI (197 aa).

The HTH tetR-type domain maps to 8-68; the sequence is PIRRSQLIHA…ATMRHLLSAL (61 aa). The H-T-H motif DNA-binding region spans 31-50; that stretch reads SIALIARLAGVSNGIISHYF.

It functions in the pathway amine and polyamine biosynthesis; betaine biosynthesis via choline pathway [regulation]. Functionally, repressor involved in the biosynthesis of the osmoprotectant glycine betaine. It represses transcription of the choline transporter BetT and the genes of BetAB involved in the synthesis of glycine betaine. This chain is HTH-type transcriptional regulator BetI, found in Pseudomonas aeruginosa (strain LESB58).